A 445-amino-acid polypeptide reads, in one-letter code: Trigger factor (445 aa).

The PPIase FKBP-type domain occupies 168–253; the sequence is GDAVIVDFVG…IHEVRAPQTP (86 aa).

Belongs to the FKBP-type PPIase family. Tig subfamily.

It localises to the cytoplasm. It carries out the reaction [protein]-peptidylproline (omega=180) = [protein]-peptidylproline (omega=0). Functionally, involved in protein export. Acts as a chaperone by maintaining the newly synthesized protein in an open conformation. Functions as a peptidyl-prolyl cis-trans isomerase. In Hyphomonas neptunium (strain ATCC 15444), this protein is Trigger factor.